A 208-amino-acid polypeptide reads, in one-letter code: NAD(P)H-quinone oxidoreductase subunit I (208 aa).

2 consecutive 4Fe-4S ferredoxin-type domains span residues 55–84 and 95–124; these read GRIHYEFDKCIACEVCVRVCPINLPVVDWV and RNYSIDFGVCIFCGNCVEYCPTNCLSMTEE. The [4Fe-4S] cluster site is built by Cys-64, Cys-67, Cys-70, Cys-74, Cys-104, Cys-107, Cys-110, and Cys-114.

It belongs to the complex I 23 kDa subunit family. As to quaternary structure, NDH-1 is composed of at least 11 different subunits. [4Fe-4S] cluster serves as cofactor.

It localises to the cellular thylakoid membrane. The catalysed reaction is a plastoquinone + NADH + (n+1) H(+)(in) = a plastoquinol + NAD(+) + n H(+)(out). The enzyme catalyses a plastoquinone + NADPH + (n+1) H(+)(in) = a plastoquinol + NADP(+) + n H(+)(out). In terms of biological role, NDH-1 shuttles electrons from an unknown electron donor, via FMN and iron-sulfur (Fe-S) centers, to quinones in the respiratory and/or the photosynthetic chain. The immediate electron acceptor for the enzyme in this species is believed to be plastoquinone. Couples the redox reaction to proton translocation, and thus conserves the redox energy in a proton gradient. The chain is NAD(P)H-quinone oxidoreductase subunit I from Prochlorococcus marinus (strain MIT 9215).